The chain runs to 282 residues: MKTPFSKMNGLGNKIIVADLRKAIHNITPQAIQALASNPQTHFDQIMAIHPPTQDADFRIEIWNADGSMAKACGNGTRCVIEWLANHNLGNNFRLETSTGIVEGKRQTDGLISVDMGRPYLNAKDMPVSREIIDTNHVDITAGPLQDACLVSVGNLHAIFFIESNIQNIPLEKYGPKLEHDPLFPERCNISIAQITSKKSLTLRTWERGAGLTQACGSAACASAVAAYRRGLTERHIDVNLPKGILSILYRDDEHIIMTGPTEHEFSGLFNPLTGTYKKDHL.

Substrate contacts are provided by Asn-13, Gln-45, and Asn-64. Cys-73 serves as the catalytic Proton donor. Substrate-binding positions include 74-75 (GN), Asn-155, Asn-189, and 207-208 (ER). The active-site Proton acceptor is Cys-216. 217–218 (GS) provides a ligand contact to substrate.

It belongs to the diaminopimelate epimerase family. As to quaternary structure, homodimer.

The protein resides in the cytoplasm. It carries out the reaction (2S,6S)-2,6-diaminopimelate = meso-2,6-diaminopimelate. It functions in the pathway amino-acid biosynthesis; L-lysine biosynthesis via DAP pathway; DL-2,6-diaminopimelate from LL-2,6-diaminopimelate: step 1/1. Catalyzes the stereoinversion of LL-2,6-diaminopimelate (L,L-DAP) to meso-diaminopimelate (meso-DAP), a precursor of L-lysine and an essential component of the bacterial peptidoglycan. This chain is Diaminopimelate epimerase, found in Bartonella bacilliformis (strain ATCC 35685 / KC583 / Herrer 020/F12,63).